We begin with the raw amino-acid sequence, 393 residues long: S-adenosylmethionine synthase (393 aa).

E9 lines the Mg(2+) pocket. H15 contributes to the ATP binding site. E43 lines the K(+) pocket. Residues E56 and Q99 each contribute to the L-methionine site. ATP-binding positions include 167 to 169 (DGK), 235 to 238 (SGRF), D246, 252 to 253 (RK), A269, K273, and K277. L-methionine is bound at residue D246. Position 277 (K277) interacts with L-methionine.

This sequence belongs to the AdoMet synthase family. In terms of assembly, homotetramer. Mn(2+) is required as a cofactor. The cofactor is Mg(2+). Co(2+) serves as cofactor. Requires K(+) as cofactor.

The protein resides in the cytoplasm. The catalysed reaction is L-methionine + ATP + H2O = S-adenosyl-L-methionine + phosphate + diphosphate. It participates in amino-acid biosynthesis; S-adenosyl-L-methionine biosynthesis; S-adenosyl-L-methionine from L-methionine: step 1/1. Functionally, catalyzes the formation of S-adenosylmethionine from methionine and ATP. The reaction comprises two steps that are both catalyzed by the same enzyme: formation of S-adenosylmethionine (AdoMet) and triphosphate, and subsequent hydrolysis of the triphosphate. The sequence is that of S-adenosylmethionine synthase (SAMS) from Solanum palustre (Non-tuber-performing potato).